The sequence spans 246 residues: uncharacterized protein (246 aa).

A helical transmembrane segment spans residues 7–29 (GRGALASTGGCVVLAVAALMFVF).

The protein localises to the membrane. This is an uncharacterized protein from Treponema pallidum (strain Nichols).